Here is a 176-residue protein sequence, read N- to C-terminus: Cell division protein ZapC (176 aa).

Belongs to the ZapC family. As to quaternary structure, interacts directly with FtsZ.

It localises to the cytoplasm. In terms of biological role, contributes to the efficiency of the cell division process by stabilizing the polymeric form of the cell division protein FtsZ. Acts by promoting interactions between FtsZ protofilaments and suppressing the GTPase activity of FtsZ. In Pseudoalteromonas translucida (strain TAC 125), this protein is Cell division protein ZapC.